The primary structure comprises 583 residues: Lamin-B3 (583 aa).

Residues 1–30 are disordered; sequence MATSTPSRAREHASAAQSPGSPTRISRMQE. Residues 2–32 are head; sequence ATSTPSRAREHASAAQSPGSPTRISRMQEKE. Residues 15–26 show a composition bias toward polar residues; it reads AAQSPGSPTRIS. Serine 21 is modified (phosphoserine). An IF rod domain is found at 30-386; that stretch reads EKEDLRHLND…KMLEGEEQRL (357 aa). Residues 33–67 form a coil 1A region; that stretch reads DLRHLNDRLAAYIERVRSLEADKSLLKIQLEEREE. The segment at 68-79 is linker 1; sequence VSSREVTNLRQL. Positions 80-215 are coil 1B; it reads YETELADARK…QKNIHTQEVK (136 aa). Residues 216 to 242 are linker 2; sequence EIKKRHDTRIVEIDSGRRVEFESKLAE. Residues 243–384 form a coil 2 region; sequence ALQELRRDHE…YRKMLEGEEQ (142 aa). Positions 383–431 are disordered; it reads EQRLKLSPSPSQRSTVSRASTSQTSRLLRGKKRKLDETGRSVTKRSYKV. The segment at 385 to 580 is tail; it reads RLKLSPSPSQ…QSHQSVDPSC (196 aa). Residues 390 to 408 show a composition bias toward polar residues; the sequence is PSPSQRSTVSRASTSQTSR. At serine 391 the chain carries Phosphoserine. Positions 429–546 constitute an LTD domain; that stretch reads YKVVQQASST…EECAERTLYR (118 aa). Cysteine 580 carries the cysteine methyl ester modification. A lipid anchor (S-farnesyl cysteine) is attached at cysteine 580. The propeptide at 581-583 is removed in mature form; the sequence is SIM.

Belongs to the intermediate filament family. In terms of processing, phosphorylation plays a key role in lamin organization, subcellular localization and nuclear envelope disintegration. Phosphorylation by CDK1 at Ser-21 at the onset of mitosis drives lamin disassembly and nuclear envelope breakdown.

The protein resides in the nucleus lamina. It is found in the nucleus envelope. It localises to the nucleus. Its subcellular location is the nucleoplasm. The protein localises to the nucleus matrix. Its function is as follows. Lamins are intermediate filament proteins that assemble into a filamentous meshwork, and which constitute the major components of the nuclear lamina, a fibrous layer on the nucleoplasmic side of the inner nuclear membrane. Lamins provide a framework for the nuclear envelope, bridging the nuclear envelope and chromatin, thereby playing an important role in nuclear assembly, chromatin organization, nuclear membrane and telomere dynamics. The structural integrity of the lamina is strictly controlled by the cell cycle, as seen by the disintegration and formation of the nuclear envelope in prophase and telophase, respectively. The sequence is that of Lamin-B3 (lmnb3.L) from Xenopus laevis (African clawed frog).